The chain runs to 430 residues: Serine--tRNA ligase (430 aa).

237-239 (TAE) serves as a coordination point for L-serine. Residue 268-270 (RAE) coordinates ATP. E291 contributes to the L-serine binding site. 355–358 (EVSS) provides a ligand contact to ATP. S391 lines the L-serine pocket.

This sequence belongs to the class-II aminoacyl-tRNA synthetase family. Type-1 seryl-tRNA synthetase subfamily. Homodimer. The tRNA molecule binds across the dimer.

It is found in the cytoplasm. It carries out the reaction tRNA(Ser) + L-serine + ATP = L-seryl-tRNA(Ser) + AMP + diphosphate + H(+). The enzyme catalyses tRNA(Sec) + L-serine + ATP = L-seryl-tRNA(Sec) + AMP + diphosphate + H(+). Its pathway is aminoacyl-tRNA biosynthesis; selenocysteinyl-tRNA(Sec) biosynthesis; L-seryl-tRNA(Sec) from L-serine and tRNA(Sec): step 1/1. Catalyzes the attachment of serine to tRNA(Ser). Is also able to aminoacylate tRNA(Sec) with serine, to form the misacylated tRNA L-seryl-tRNA(Sec), which will be further converted into selenocysteinyl-tRNA(Sec). This chain is Serine--tRNA ligase, found in Baumannia cicadellinicola subsp. Homalodisca coagulata.